The sequence spans 697 residues: Pentatricopeptide repeat-containing protein At2g13600 (697 aa).

PPR repeat units follow at residues 18 to 53 (DSSP…GFSN), 54 to 84 (EIFI…MPQR), 85 to 115 (NIYT…MPER), 116 to 150 (DQCT…GFVL), 151 to 185 (NEYS…PFLS), 186 to 216 (DVYI…MGDR), 217 to 251 (NVVS…RVEP), 252 to 282 (DEVT…VVKN), 288 to 322 (DIIL…NVIA), 324 to 349 (TSMI…MAER), 350 to 384 (NVVS…SVCP), 385 to 419 (THYS…GFKF), 426 to 456 (DIFV…MMER), 457 to 491 (DCVS…GEKP), 492 to 527 (DHIT…GVAP), and 528 to 558 (LRDH…MPMQ). Residues 563 to 638 (IWGSLLAACK…QPGCSWIKIQ (76 aa)) form a type E motif region. A type E(+) motif region spans residues 639 to 669 (GHDHVFMVKDKSHPRKKQIHSLLDILIAEMR).

This sequence belongs to the PPR family. PCMP-E subfamily.

This is Pentatricopeptide repeat-containing protein At2g13600 (PCMP-E76) from Arabidopsis thaliana (Mouse-ear cress).